The sequence spans 288 residues: Small ribosomal subunit protein uS3 (288 aa).

The KH type-2 domain occupies 38–106 (IRRMMSKGLE…QVQLNIIEVK (69 aa)). The segment at 209 to 288 (PGRETPAEAP…TQPAETQQEG (80 aa)) is disordered. The segment covering 219–232 (SRPRRERGDRSERP) has biased composition (basic and acidic residues). A compositionally biased stretch (low complexity) spans 249–264 (AGRAAATTIAQAAETP). Residues 277 to 288 (AATQPAETQQEG) show a composition bias toward polar residues.

It belongs to the universal ribosomal protein uS3 family. In terms of assembly, part of the 30S ribosomal subunit. Forms a tight complex with proteins S10 and S14.

Functionally, binds the lower part of the 30S subunit head. Binds mRNA in the 70S ribosome, positioning it for translation. This Salinispora tropica (strain ATCC BAA-916 / DSM 44818 / JCM 13857 / NBRC 105044 / CNB-440) protein is Small ribosomal subunit protein uS3.